A 384-amino-acid polypeptide reads, in one-letter code: tRNA(Met) cytidine acetate ligase (384 aa).

Residues 7–20 (VAEY…HEFL), glycine 101, asparagine 153, and arginine 178 contribute to the ATP site.

This sequence belongs to the TmcAL family.

The protein localises to the cytoplasm. It catalyses the reaction cytidine(34) in elongator tRNA(Met) + acetate + ATP = N(4)-acetylcytidine(34) in elongator tRNA(Met) + AMP + diphosphate. Catalyzes the formation of N(4)-acetylcytidine (ac(4)C) at the wobble position of elongator tRNA(Met), using acetate and ATP as substrates. First activates an acetate ion to form acetyladenylate (Ac-AMP) and then transfers the acetyl group to tRNA to form ac(4)C34. The protein is tRNA(Met) cytidine acetate ligase of Lactobacillus delbrueckii subsp. bulgaricus (strain ATCC 11842 / DSM 20081 / BCRC 10696 / JCM 1002 / NBRC 13953 / NCIMB 11778 / NCTC 12712 / WDCM 00102 / Lb 14).